The primary structure comprises 346 residues: Dihydroorotase (346 aa).

Positions 17 and 19 each coordinate Zn(2+). Substrate contacts are provided by residues 19 to 21 (HVR) and asparagine 45. Zn(2+) is bound by residues lysine 102, histidine 139, and histidine 177. Lysine 102 carries the N6-carboxylysine modification. Residue histidine 139 participates in substrate binding. Leucine 222 contacts substrate. Aspartate 250 is a Zn(2+) binding site. Residue aspartate 250 is part of the active site. Residues histidine 254 and alanine 266 each contribute to the substrate site.

The protein belongs to the metallo-dependent hydrolases superfamily. DHOase family. Class II DHOase subfamily. In terms of assembly, homodimer. The cofactor is Zn(2+).

It carries out the reaction (S)-dihydroorotate + H2O = N-carbamoyl-L-aspartate + H(+). Its pathway is pyrimidine metabolism; UMP biosynthesis via de novo pathway; (S)-dihydroorotate from bicarbonate: step 3/3. Catalyzes the reversible cyclization of carbamoyl aspartate to dihydroorotate. This Delftia acidovorans (strain DSM 14801 / SPH-1) protein is Dihydroorotase.